Here is a 706-residue protein sequence, read N- to C-terminus: Polyribonucleotide nucleotidyltransferase (706 aa).

Residues aspartate 488 and aspartate 494 each contribute to the Mg(2+) site. One can recognise a KH domain in the interval 555-614 (PRLFTMKINPDKIRDVIGKGGSVIRALTEETGTQINIDEDGTITIASADPAKAEEAKRRI). An S1 motif domain is found at 624 to 692 (GKIYEGPITK…EKGRIKLSMK (69 aa)).

It belongs to the polyribonucleotide nucleotidyltransferase family. Requires Mg(2+) as cofactor.

It is found in the cytoplasm. The enzyme catalyses RNA(n+1) + phosphate = RNA(n) + a ribonucleoside 5'-diphosphate. Functionally, involved in mRNA degradation. Catalyzes the phosphorolysis of single-stranded polyribonucleotides processively in the 3'- to 5'-direction. The protein is Polyribonucleotide nucleotidyltransferase of Albidiferax ferrireducens (strain ATCC BAA-621 / DSM 15236 / T118) (Rhodoferax ferrireducens).